The primary structure comprises 220 residues: MSPSVSVTKVQVENYVFPPTVKPPASTKTLFLGGAGHRGLDVEGKFVKFTVIGVYLEESAVQFLAPKWKGKSAEELIHSVDFFRDIVTGPFEKFTRVRFILPLTGKQFSEKVAENCVAHWKATGTYSDAGSRAIEKFLNVVKSETFLPGASILFTQSPLGSLTISFTKDDSISEAGNAVIENKQFSEAVLETIIGEHGVSPAAKCSIAARMSELFKNSLF.

Residues threonine 50, asparagine 115, and threonine 192 each coordinate substrate.

It belongs to the chalcone isomerase family.

It carries out the reaction a chalcone = a flavanone.. It functions in the pathway secondary metabolite biosynthesis; flavonoid biosynthesis. Functionally, catalyzes the intramolecular cyclization of bicyclic chalcones into tricyclic (S)-flavanones. Responsible for the isomerization of 4,2',4',6'-tetrahydroxychalcone (also termed chalcone) into naringenin. The chain is Chalcone--flavanone isomerase B (CHI2) from Petunia hybrida (Petunia).